Consider the following 486-residue polypeptide: Argininosuccinate lyase (486 aa).

It belongs to the lyase 1 family. Argininosuccinate lyase subfamily.

The protein resides in the cytoplasm. The catalysed reaction is 2-(N(omega)-L-arginino)succinate = fumarate + L-arginine. It functions in the pathway amino-acid biosynthesis; L-arginine biosynthesis; L-arginine from L-ornithine and carbamoyl phosphate: step 3/3. This chain is Argininosuccinate lyase, found in Acidobacterium capsulatum (strain ATCC 51196 / DSM 11244 / BCRC 80197 / JCM 7670 / NBRC 15755 / NCIMB 13165 / 161).